The sequence spans 213 residues: Riboflavin synthase (213 aa).

Lumazine-binding repeat units follow at residues 1-97 (MFTG…IGGH) and 98-195 (LMSG…VDTV). 2,4-dihydroxypteridine is bound by residues 4–6 (GIV), 48–50 (CLT), 62–67 (DLMKET), 101–103 (GHI), K137, 146–148 (SLT), and 160–165 (HLIPET).

As to quaternary structure, homotrimer. Unlike in B.subtilis, does not interact with 6,7-dimethyl-8-ribityllumazine synthase.

The enzyme catalyses 2 6,7-dimethyl-8-(1-D-ribityl)lumazine + H(+) = 5-amino-6-(D-ribitylamino)uracil + riboflavin. Its pathway is cofactor biosynthesis; riboflavin biosynthesis; riboflavin from 2-hydroxy-3-oxobutyl phosphate and 5-amino-6-(D-ribitylamino)uracil: step 2/2. Functionally, catalyzes the dismutation of two molecules of 6,7-dimethyl-8-ribityllumazine, resulting in the formation of riboflavin and 5-amino-6-(D-ribitylamino)uracil. The sequence is that of Riboflavin synthase (ribC) from Escherichia coli (strain K12).